Here is a 307-residue protein sequence, read N- to C-terminus: Acyl transferase (307 aa).

Active-site charge relay system residues include serine 116, aspartate 213, and histidine 243.

It belongs to the LuxD family.

The protein operates within lipid metabolism; fatty acid reduction for biolumincescence. Functionally, acyl transferase is part of the fatty acid reductase system required for aldehyde biosynthesis; it produces fatty acids for the luminescent reaction. This Aliivibrio fischeri (strain MJ11) (Vibrio fischeri) protein is Acyl transferase.